A 243-amino-acid chain; its full sequence is Carboxy-S-adenosyl-L-methionine synthase (243 aa).

Residues Tyr-40, 65-67, 90-91, 118-119, Asn-133, and Arg-200 each bind S-adenosyl-L-methionine; these read GCS, DN, and DI.

The protein belongs to the class I-like SAM-binding methyltransferase superfamily. Cx-SAM synthase family. Homodimer.

The catalysed reaction is prephenate + S-adenosyl-L-methionine = carboxy-S-adenosyl-L-methionine + 3-phenylpyruvate + H2O. In terms of biological role, catalyzes the conversion of S-adenosyl-L-methionine (SAM) to carboxy-S-adenosyl-L-methionine (Cx-SAM). The sequence is that of Carboxy-S-adenosyl-L-methionine synthase from Shewanella oneidensis (strain ATCC 700550 / JCM 31522 / CIP 106686 / LMG 19005 / NCIMB 14063 / MR-1).